Consider the following 494-residue polypeptide: Aspartyl/glutamyl-tRNA(Asn/Gln) amidotransferase subunit B (494 aa).

This sequence belongs to the GatB/GatE family. GatB subfamily. Heterotrimer of A, B and C subunits.

It catalyses the reaction L-glutamyl-tRNA(Gln) + L-glutamine + ATP + H2O = L-glutaminyl-tRNA(Gln) + L-glutamate + ADP + phosphate + H(+). It carries out the reaction L-aspartyl-tRNA(Asn) + L-glutamine + ATP + H2O = L-asparaginyl-tRNA(Asn) + L-glutamate + ADP + phosphate + 2 H(+). Functionally, allows the formation of correctly charged Asn-tRNA(Asn) or Gln-tRNA(Gln) through the transamidation of misacylated Asp-tRNA(Asn) or Glu-tRNA(Gln) in organisms which lack either or both of asparaginyl-tRNA or glutaminyl-tRNA synthetases. The reaction takes place in the presence of glutamine and ATP through an activated phospho-Asp-tRNA(Asn) or phospho-Glu-tRNA(Gln). This chain is Aspartyl/glutamyl-tRNA(Asn/Gln) amidotransferase subunit B, found in Trichodesmium erythraeum (strain IMS101).